Reading from the N-terminus, the 82-residue chain is Large ribosomal subunit protein uL23 (82 aa).

The protein belongs to the universal ribosomal protein uL23 family. As to quaternary structure, part of the 50S ribosomal subunit. Contacts protein L29.

Binds to 23S rRNA. One of the proteins that surrounds the polypeptide exit tunnel on the outside of the ribosome. The chain is Large ribosomal subunit protein uL23 from Methanosarcina barkeri (strain Fusaro / DSM 804).